The chain runs to 376 residues: N-acetyldiaminopimelate deacetylase (376 aa).

Aspartate 69 is an active-site residue. Glutamate 128 serves as the catalytic Proton acceptor.

This sequence belongs to the peptidase M20A family. N-acetyldiaminopimelate deacetylase subfamily.

It carries out the reaction N-acetyl-(2S,6S)-2,6-diaminopimelate + H2O = (2S,6S)-2,6-diaminopimelate + acetate. The protein operates within amino-acid biosynthesis; L-lysine biosynthesis via DAP pathway; LL-2,6-diaminopimelate from (S)-tetrahydrodipicolinate (acetylase route): step 3/3. In terms of biological role, catalyzes the conversion of N-acetyl-diaminopimelate to diaminopimelate and acetate. The sequence is that of N-acetyldiaminopimelate deacetylase from Streptococcus pneumoniae (strain P1031).